The following is a 266-amino-acid chain: Small ribosomal subunit protein uS2 (266 aa).

Belongs to the universal ribosomal protein uS2 family.

The polypeptide is Small ribosomal subunit protein uS2 (Bartonella tribocorum (strain CIP 105476 / IBS 506)).